The following is a 346-amino-acid chain: ATP-dependent (S)-NAD(P)H-hydrate dehydratase 2 (346 aa).

Residues methionine 1 to threonine 20 are disordered. The YjeF C-terminal domain maps to leucine 28 to valine 339. (6S)-NADPHX is bound by residues glycine 135 and asparagine 188–arginine 194. ATP-binding positions include lysine 228 to aspartate 232 and glycine 248 to glycine 257. Aspartate 258 serves as a coordination point for (6S)-NADPHX.

This sequence belongs to the NnrD/CARKD family. Requires Mg(2+) as cofactor.

The protein localises to the cytoplasm. The enzyme catalyses (6S)-NADHX + ATP = ADP + phosphate + NADH + H(+). The catalysed reaction is (6S)-NADPHX + ATP = ADP + phosphate + NADPH + H(+). Catalyzes the dehydration of the S-form of NAD(P)HX at the expense of ATP, which is converted to ADP. Together with NAD(P)HX epimerase, which catalyzes the epimerization of the S- and R-forms, the enzyme allows the repair of both epimers of NAD(P)HX, a damaged form of NAD(P)H that is a result of enzymatic or heat-dependent hydration. The chain is ATP-dependent (S)-NAD(P)H-hydrate dehydratase 2 from Puccinia graminis f. sp. tritici (strain CRL 75-36-700-3 / race SCCL) (Black stem rust fungus).